The following is a 130-amino-acid chain: uncharacterized protein (130 aa).

This is an uncharacterized protein from Methanocaldococcus jannaschii (strain ATCC 43067 / DSM 2661 / JAL-1 / JCM 10045 / NBRC 100440) (Methanococcus jannaschii).